Consider the following 284-residue polypeptide: Ubiquitin thioesterase otubain-like (284 aa).

In terms of domain architecture, OTU spans 77–274 (GEIRYIRGDG…PGHYDVIYKK (198 aa)). Aspartate 85 is a catalytic residue. Cysteine 88 acts as the Nucleophile in catalysis. Isoleucine 176 contacts substrate. Active-site residues include histidine 245 and histidine 267.

The protein belongs to the peptidase C65 family.

It carries out the reaction Thiol-dependent hydrolysis of ester, thioester, amide, peptide and isopeptide bonds formed by the C-terminal Gly of ubiquitin (a 76-residue protein attached to proteins as an intracellular targeting signal).. Functionally, hydrolase that can remove conjugated ubiquitin from proteins and plays an important regulatory role at the level of protein turnover by preventing degradation. Specifically cleaves 'Lys-48'-linked polyubiquitin. This is Ubiquitin thioesterase otubain-like (otub-1) from Caenorhabditis elegans.